Reading from the N-terminus, the 96-residue chain is Co-chaperonin GroES (96 aa).

It belongs to the GroES chaperonin family. Heptamer of 7 subunits arranged in a ring. Interacts with the chaperonin GroEL.

It localises to the cytoplasm. Together with the chaperonin GroEL, plays an essential role in assisting protein folding. The GroEL-GroES system forms a nano-cage that allows encapsulation of the non-native substrate proteins and provides a physical environment optimized to promote and accelerate protein folding. GroES binds to the apical surface of the GroEL ring, thereby capping the opening of the GroEL channel. In Dechloromonas aromatica (strain RCB), this protein is Co-chaperonin GroES.